The following is a 162-amino-acid chain: D-aminoacyl-tRNA deacylase (162 aa).

Positions 143-144 (GP) match the Gly-cisPro motif, important for rejection of L-amino acids motif.

This sequence belongs to the DTD family. As to quaternary structure, homodimer.

It localises to the cytoplasm. The catalysed reaction is glycyl-tRNA(Ala) + H2O = tRNA(Ala) + glycine + H(+). The enzyme catalyses a D-aminoacyl-tRNA + H2O = a tRNA + a D-alpha-amino acid + H(+). An aminoacyl-tRNA editing enzyme that deacylates mischarged D-aminoacyl-tRNAs. Also deacylates mischarged glycyl-tRNA(Ala), protecting cells against glycine mischarging by AlaRS. Acts via tRNA-based rather than protein-based catalysis; rejects L-amino acids rather than detecting D-amino acids in the active site. By recycling D-aminoacyl-tRNA to D-amino acids and free tRNA molecules, this enzyme counteracts the toxicity associated with the formation of D-aminoacyl-tRNA entities in vivo and helps enforce protein L-homochirality. The sequence is that of D-aminoacyl-tRNA deacylase from Nitratidesulfovibrio vulgaris (strain ATCC 29579 / DSM 644 / CCUG 34227 / NCIMB 8303 / VKM B-1760 / Hildenborough) (Desulfovibrio vulgaris).